Here is a 389-residue protein sequence, read N- to C-terminus: Probable peptide chain release factor 1, mitochondrial (389 aa).

An N5-methylglutamine modification is found at Gln259.

It belongs to the prokaryotic/mitochondrial release factor family. Methylation of glutamine in the GGQ triplet is conserved from bacteria to mammals.

Its subcellular location is the mitochondrion. Mitochondrial peptide chain release factor that directs the termination of translation in response to the peptide chain termination codons UAA and UAG. In Caenorhabditis elegans, this protein is Probable peptide chain release factor 1, mitochondrial.